We begin with the raw amino-acid sequence, 200 residues long: Pyridoxal 5'-phosphate synthase subunit PdxT (200 aa).

Gly50 to Ser52 provides a ligand contact to L-glutamine. Cys82 functions as the Nucleophile in the catalytic mechanism. Residues Arg110 and Ile138–Arg139 each bind L-glutamine. Catalysis depends on charge relay system residues His174 and Glu176.

It belongs to the glutaminase PdxT/SNO family. As to quaternary structure, in the presence of PdxS, forms a dodecamer of heterodimers. Only shows activity in the heterodimer.

It catalyses the reaction aldehydo-D-ribose 5-phosphate + D-glyceraldehyde 3-phosphate + L-glutamine = pyridoxal 5'-phosphate + L-glutamate + phosphate + 3 H2O + H(+). The enzyme catalyses L-glutamine + H2O = L-glutamate + NH4(+). It participates in cofactor biosynthesis; pyridoxal 5'-phosphate biosynthesis. Catalyzes the hydrolysis of glutamine to glutamate and ammonia as part of the biosynthesis of pyridoxal 5'-phosphate. The resulting ammonia molecule is channeled to the active site of PdxS. In Oceanobacillus iheyensis (strain DSM 14371 / CIP 107618 / JCM 11309 / KCTC 3954 / HTE831), this protein is Pyridoxal 5'-phosphate synthase subunit PdxT.